Consider the following 107-residue polypeptide: Colipase (107 aa).

The N-terminal stretch at Met1 to Ala17 is a signal peptide. The propeptide at Ala18–Arg22 is enterostatin, activation peptide. 5 disulfides stabilise this stretch: Cys34-Cys45, Cys40-Cys56, Cys44-Cys78, Cys66-Cys86, and Cys80-Cys104.

The protein belongs to the colipase family. In terms of assembly, forms a 1:1 stoichiometric complex with pancreatic lipase. Expressed by the pancreas.

It is found in the secreted. Its function is as follows. Colipase is a cofactor of pancreatic lipase. It allows the lipase to anchor itself to the lipid-water interface. Without colipase the enzyme is washed off by bile salts, which have an inhibitory effect on the lipase. Functionally, enterostatin has a biological activity as a satiety signal. In Oryctolagus cuniculus (Rabbit), this protein is Colipase (CLPS).